The primary structure comprises 371 residues: Alanine racemase (371 aa).

The active-site Proton acceptor; specific for D-alanine is the lysine 35. Residue lysine 35 is modified to N6-(pyridoxal phosphate)lysine. Arginine 130 provides a ligand contact to substrate. The active-site Proton acceptor; specific for L-alanine is tyrosine 256. A substrate-binding site is contributed by methionine 304.

Belongs to the alanine racemase family. The cofactor is pyridoxal 5'-phosphate.

The catalysed reaction is L-alanine = D-alanine. It functions in the pathway amino-acid biosynthesis; D-alanine biosynthesis; D-alanine from L-alanine: step 1/1. In terms of biological role, catalyzes the interconversion of L-alanine and D-alanine. May also act on other amino acids. This is Alanine racemase (alr) from Verminephrobacter eiseniae (strain EF01-2).